Here is a 276-residue protein sequence, read N- to C-terminus: Src-like-adapter (276 aa).

Residue glycine 2 is the site of N-myristoyl glycine attachment. The 61-residue stretch at leucine 22–histidine 82 folds into the SH3 domain. The SH2 domain maps to tryptophan 84 to cysteine 175. Residues glutamate 212 to aspartate 276 form an SLA C-terminal region. Serine 253 is subject to Phosphoserine. At tyrosine 273 the chain carries Phosphotyrosine.

In terms of assembly, interacts with EPHA2, VAV1, LCP2 and PDGFRB. Homodimer. Homodimerization and interaction with phosphorylated CBL occurs via its C-terminal domain. Interacts with phosphorylated proteins ZAP70, CD3Z, SYK and LAT via its SH2 domain. As to expression, expressed in lung and fetal brain. Weakly expressed in heart, adult brain, placenta, liver, skeletal muscle, kidney and pancreas.

The protein resides in the cytoplasm. Its subcellular location is the endosome. Functionally, adapter protein, which negatively regulates T-cell receptor (TCR) signaling. Inhibits T-cell antigen-receptor induced activation of nuclear factor of activated T-cells. Involved in the negative regulation of positive selection and mitosis of T-cells. May act by linking signaling proteins such as ZAP70 with CBL, leading to a CBL dependent degradation of signaling proteins. This Homo sapiens (Human) protein is Src-like-adapter (SLA).